A 297-amino-acid chain; its full sequence is Syntaxin-4 (297 aa).

The span at 1–12 (MRDRTHELRQGD) shows a compositional bias: basic and acidic residues. The tract at residues 1–21 (MRDRTHELRQGDDSSDDEDKE) is disordered. The Cytoplasmic portion of the chain corresponds to 1 to 275 (MRDRTHELRQ…QKKARKKKVF (275 aa)). Residues serine 14 and serine 15 each carry the phosphoserine modification. Phosphothreonine is present on threonine 31. A phosphoserine mark is found at serine 36, serine 117, serine 208, and serine 248. Residues 43-163 (QKVRTIRQTI…ERIRRQLKIT (121 aa)) adopt a coiled-coil conformation. The t-SNARE coiled-coil homology domain maps to 200 to 262 (LNEISARHSE…ERGQEHVKVA (63 aa)). A helical; Anchor for type IV membrane protein transmembrane segment spans residues 276–296 (IAICLSITVLILVVIIVISTL). Residue valine 297 is a topological domain, extracellular.

The protein belongs to the syntaxin family. Component of the SNARE complex composed of STX4, SNAP23 and VAMP7 that interacts with SYT7 during lysosomal exocytosis. Found in a complex with VAMP8 and SNAP23. Detected in a complex with SNAP23 and STXBP4. Interacts with VAMP2. Interacts with SNAP23 and SNAPIN. Interacts with LLGL1. Interacts (via C-terminus) with CENPF. Interacts with DOC2B. Interacts with STXBP6. Interacts with STXBP3; excludes interaction with DOC2B and SNAP25. Interacts with STXBP4; excludes interaction with VAMP2. Interacts with STXBP5L.

It localises to the cell membrane. The protein localises to the cell projection. Its subcellular location is the neuron projection. It is found in the stereocilium. Functionally, plasma membrane t-SNARE that mediates docking of transport vesicles. Necessary for the translocation of SLC2A4 from intracellular vesicles to the plasma membrane. In neurons, recruited at neurite tips to membrane domains rich in the phospholipid 1-oleoyl-2-palmitoyl-PC (OPPC) which promotes neurite tip surface expression of the dopamine transporter SLC6A3/DAT by facilitating fusion of SLC6A3-containing transport vesicles with the plasma membrane. Together with STXB3 and VAMP2, may also play a role in docking/fusion of intracellular GLUT4-containing vesicles with the cell surface in adipocytes and in docking of synaptic vesicles at presynaptic active zones. Required for normal hearing. This chain is Syntaxin-4 (STX4), found in Bos taurus (Bovine).